The following is a 157-amino-acid chain: Protein Smg homolog (157 aa).

It belongs to the Smg family.

This is Protein Smg homolog from Shewanella piezotolerans (strain WP3 / JCM 13877).